Consider the following 706-residue polypeptide: Choline transporter-like protein 2 (706 aa).

Residues 1 to 33 (MGGERQHYYGKHGTPQKYDPTFKGPIYHRGCTD) lie on the Cytoplasmic side of the membrane. Thr14 bears the Phosphothreonine mark. A helical membrane pass occupies residues 34-54 (VICCVFLLLAIVGYVAVGIIA). The Extracellular segment spans residues 55 to 232 (WTHGDPRKVI…RIFEDYTVSW (178 aa)). N-linked (GlcNAc...) asparagine glycosylation is found at Asn187 and Asn200. The helical transmembrane segment at 233-253 (YWIIIGLVIAMVLSLLFIILL) threads the bilayer. The Cytoplasmic portion of the chain corresponds to 254–256 (RFL). A helical membrane pass occupies residues 257 to 277 (AGIMVWVMIVMVILVLGYGIF). Residues 278-315 (HCYMEYSRLRGEAGSDISLVDLGFQTDLRVYLHLRQTW) lie on the Extracellular side of the membrane. Residues 316 to 336 (MAFMIILSILEVIIILLLIFL) traverse the membrane as a helical segment. The Cytoplasmic portion of the chain corresponds to 337-364 (RKRILIAIALIKEASRAVGYVMCSMLYP). The helical transmembrane segment at 365–385 (LVTFLLLCLCIAYWASTAIFL) threads the bilayer. Residues 386 to 440 (STSNEAVYKIFSDTDCQAVGKTCNPENFSSSSEFHLCPGAHCQFAFYGGESTYHR) are Extracellular-facing. Residues 441–461 (ALLGLQIFNAFMFFWLANFVL) traverse the membrane as a helical segment. Topologically, residues 462 to 504 (ALGQVTLAGAFASYYWALKKPDDLPAFPLFSAFGRALRYHTGS) are cytoplasmic. A helical membrane pass occupies residues 505–525 (LAFGSLLLAIVQIIRVMLEYL). At 526–563 (DQRLKAAENKFAKFLMTCLKCCFWCLEKFIKFLNRNAY) the chain is on the extracellular side. The helical transmembrane segment at 564 to 584 (IMIAIYGTNFCTSARNAFFLL) threads the bilayer. At 585 to 599 (MRNIIRVAVLDKVTD) the chain is on the cytoplasmic side. The chain crosses the membrane as a helical span at residues 600–620 (FLFLLGKLLIVGSVGILAFFF). Over 621–638 (FTHRIRIVQDTAPPLNYY) the chain is Extracellular. Residues 639–659 (WVPILTVIVGSYLIAHGFFSV) form a helical membrane-spanning segment. The Cytoplasmic segment spans residues 660 to 706 (YGMCVDTLFLCFLEDLERNDGSMERPYFMSPTLKRLLNKTNRKPAES).

This sequence belongs to the CTL (choline transporter-like) family. In terms of assembly, interacts with COCH. Post-translationally, N-glycosylated.

It localises to the cell membrane. The protein resides in the mitochondrion outer membrane. It catalyses the reaction choline(out) + n H(+)(in) = choline(in) + n H(+)(out). The enzyme catalyses ethanolamine(out) + n H(+)(in) = ethanolamine(in) + n H(+)(out). Its function is as follows. Choline/H+ antiporter, mainly in mitochodria. Also acts as a low-affinity ethanolamine/H+ antiporter, regulating the supply of extracellular ethanolamine (Etn) for the CDP-Etn pathway, redistribute intracellular Etn and balance the CDP-Cho and CDP-Etn arms of the Kennedy pathway. This chain is Choline transporter-like protein 2 (SLC44A2), found in Sus scrofa (Pig).